A 245-amino-acid polypeptide reads, in one-letter code: DNA polymerase sliding clamp (245 aa).

It belongs to the PCNA family. Homotrimer. The subunits circularize to form a toroid; DNA passes through its center. Replication factor C (RFC) is required to load the toroid on the DNA.

Functionally, sliding clamp subunit that acts as a moving platform for DNA processing. Responsible for tethering the catalytic subunit of DNA polymerase and other proteins to DNA during high-speed replication. This is DNA polymerase sliding clamp from Methanosarcina acetivorans (strain ATCC 35395 / DSM 2834 / JCM 12185 / C2A).